The following is a 174-amino-acid chain: Flavodoxin (174 aa).

Residues 4–165 (VGLFYGSDTG…RVEKWCKQIY (162 aa)) form the Flavodoxin-like domain.

This sequence belongs to the flavodoxin family. FMN serves as cofactor.

Low-potential electron donor to a number of redox enzymes. In Haemophilus influenzae (strain ATCC 51907 / DSM 11121 / KW20 / Rd), this protein is Flavodoxin (fldA).